A 351-amino-acid chain; its full sequence is Ribosomal RNA large subunit methyltransferase M (351 aa).

S-adenosyl-L-methionine is bound by residues Ser186, 219–222 (APGG), Asp238, Asp258, and Asp274. Lys303 functions as the Proton acceptor in the catalytic mechanism.

It belongs to the class I-like SAM-binding methyltransferase superfamily. RNA methyltransferase RlmE family. RlmM subfamily. In terms of assembly, monomer.

Its subcellular location is the cytoplasm. It catalyses the reaction cytidine(2498) in 23S rRNA + S-adenosyl-L-methionine = 2'-O-methylcytidine(2498) in 23S rRNA + S-adenosyl-L-homocysteine + H(+). Functionally, catalyzes the 2'-O-methylation at nucleotide C2498 in 23S rRNA. In Xylella fastidiosa (strain M23), this protein is Ribosomal RNA large subunit methyltransferase M.